Reading from the N-terminus, the 706-residue chain is Fatty acid oxidation complex subunit alpha (706 aa).

Positions 1 to 188 (MEKTFNLTRR…KMGLVNDVVP (188 aa)) are enoyl-CoA hydratase. The segment at 308–706 (RKVKKAVILG…TMARENVSFF (399 aa)) is 3-hydroxyacyl-CoA dehydrogenase.

This sequence in the N-terminal section; belongs to the enoyl-CoA hydratase/isomerase family. In the central section; belongs to the 3-hydroxyacyl-CoA dehydrogenase family. Heterotetramer of two alpha chains (FadJ) and two beta chains (FadI).

The protein localises to the cytoplasm. The catalysed reaction is a (3S)-3-hydroxyacyl-CoA = a (2E)-enoyl-CoA + H2O. The enzyme catalyses a 4-saturated-(3S)-3-hydroxyacyl-CoA = a (3E)-enoyl-CoA + H2O. It catalyses the reaction a (3S)-3-hydroxyacyl-CoA + NAD(+) = a 3-oxoacyl-CoA + NADH + H(+). It carries out the reaction (3S)-3-hydroxybutanoyl-CoA = (3R)-3-hydroxybutanoyl-CoA. It participates in lipid metabolism; fatty acid beta-oxidation. In terms of biological role, catalyzes the formation of a hydroxyacyl-CoA by addition of water on enoyl-CoA. Also exhibits 3-hydroxyacyl-CoA epimerase and 3-hydroxyacyl-CoA dehydrogenase activities. The polypeptide is Fatty acid oxidation complex subunit alpha (Shewanella sp. (strain W3-18-1)).